The following is a 367-amino-acid chain: Alanine racemase (367 aa).

Lys35 serves as the catalytic Proton acceptor; specific for D-alanine. Lys35 bears the N6-(pyridoxal phosphate)lysine mark. Arg130 is a binding site for substrate. Tyr259 acts as the Proton acceptor; specific for L-alanine in catalysis. Met307 contributes to the substrate binding site.

It belongs to the alanine racemase family. The cofactor is pyridoxal 5'-phosphate.

The catalysed reaction is L-alanine = D-alanine. It functions in the pathway amino-acid biosynthesis; D-alanine biosynthesis; D-alanine from L-alanine: step 1/1. Its function is as follows. Catalyzes the interconversion of L-alanine and D-alanine. May also act on other amino acids. The chain is Alanine racemase (alr) from Delftia acidovorans (strain DSM 14801 / SPH-1).